Here is a 232-residue protein sequence, read N- to C-terminus: 2,3,4,5-tetrahydropyridine-2,6-dicarboxylate N-acetyltransferase (232 aa).

It belongs to the transferase hexapeptide repeat family. DapH subfamily.

It catalyses the reaction (S)-2,3,4,5-tetrahydrodipicolinate + acetyl-CoA + H2O = L-2-acetamido-6-oxoheptanedioate + CoA. It functions in the pathway amino-acid biosynthesis; L-lysine biosynthesis via DAP pathway; LL-2,6-diaminopimelate from (S)-tetrahydrodipicolinate (acetylase route): step 1/3. In terms of biological role, catalyzes the transfer of an acetyl group from acetyl-CoA to tetrahydrodipicolinate. This chain is 2,3,4,5-tetrahydropyridine-2,6-dicarboxylate N-acetyltransferase, found in Streptococcus mutans serotype c (strain ATCC 700610 / UA159).